The sequence spans 515 residues: Spermatogenesis-associated protein 2 (515 aa).

A PUB domain is found at 78–150 (ALHCAFSMLE…VYKLKELVES (73 aa)). The short motif at 321-338 (TYFSTQDDVDLYTDSEPR) is the PIM motif element. Positions 429–452 (GHQTQGLDRLAPVHSKPKPSTTAT) are disordered.

The protein belongs to the SPATA2 family. In terms of assembly, interacts (via the PIM motif) with RNF31/HOIP (via the PUB domain); the interaction is direct. Interacts (via the PUB domain) with CYLD; the interaction is direct. In terms of tissue distribution, widely expressed, with highest expression in testis, lung and intestine, and lower expression in brain, heart and spleen. Present at high level in Sertoli cells: expressed from stage I to stage XII of the testis seminiferous epithelium (at protein level).

The protein localises to the cytoplasm. The protein resides in the nucleus. In terms of biological role, bridging factor that mediates the recruitment of CYLD to the LUBAC complex, thereby regulating TNF-alpha-induced necroptosis. Acts as a direct binding intermediate that bridges RNF31/HOIP, the catalytic subunit of the LUBAC complex, and the deubiquitinase (CYLD), thereby recruiting CYLD to the TNF-R1 signaling complex (TNF-RSC). Required to activate the 'Met-1'- (linear) and 'Lys-63'-linked deubiquitinase activities of CYLD. Controls the kinase activity of RIPK1 and TNF-alpha-induced necroptosis by promoting 'Met-1'-linked deubiquitination of RIPK1 by CYLD. The polypeptide is Spermatogenesis-associated protein 2 (Mus musculus (Mouse)).